Reading from the N-terminus, the 688-residue chain is Nucleolar protein 10 (688 aa).

The residue at position 1 (Met-1) is an N-acetylmethionine. Position 25 is a phosphoserine (Ser-25). WD repeat units follow at residues 44-82, 88-124, 127-163, 170-205, 219-258, 262-300, and 304-341; these read ELIQ…CYDT, KFER…FHSQ, FYYK…RLNL, NPLQ…CWDP, NSVT…LYDL, KPLL…MWNK, and KIFT…IYYI. A coiled-coil region spans residues 423 to 446; the sequence is EYRKDKIRQKIEETRAQRVQLKKL. Ser-475 bears the Phosphoserine mark. The residue at position 481 (Thr-481) is a Phosphothreonine. Phosphoserine is present on Ser-514. Coiled-coil stretches lie at residues 514–589 and 640–673; these read SEKR…TVLK and SKQL…LRRS. Disordered regions lie at residues 529–557 and 645–688; these read LREK…EKAW and FTLK…RSFH. The segment covering 648–663 has biased composition (basic and acidic residues); that stretch reads KRSEQQKKQQEAEKLH. Residues 664–688 show a composition bias toward basic residues; the sequence is RQERKRLRRSAGHLKSRHKRGRSFH.

The protein belongs to the WD repeat NOL10/ENP2 family.

Its subcellular location is the nucleus. It is found in the nucleolus. This Homo sapiens (Human) protein is Nucleolar protein 10 (NOL10).